A 706-amino-acid chain; its full sequence is Choline transporter-like protein 2 (706 aa).

The Cytoplasmic portion of the chain corresponds to 1 to 33 (MGDERPHYYGKHGTPQKYDPTFKGPIYNRGCTD). Position 14 is a phosphothreonine (T14). The chain crosses the membrane as a helical span at residues 34–54 (IICCVFLLLAIVGYVAVGIIA). Over 55–232 (WTHGDPRKVI…RIFEDYTVSW (178 aa)) the chain is Extracellular. N-linked (GlcNAc...) asparagine glycosylation is found at N187 and N200. A helical membrane pass occupies residues 233–253 (YWIIIGLVIAMAMSLLFIILL). Over 254 to 256 (RFL) the chain is Cytoplasmic. A helical membrane pass occupies residues 257-277 (AGIMVWVMIIMVILVLGYGIF). Residues 278 to 315 (HCYMEYSRLRGEAGSDVSLVDLGFQTDFRVYLHLRQTW) lie on the Extracellular side of the membrane. A helical membrane pass occupies residues 316–336 (LAFMIILSILEVIIILLLIFL). Topologically, residues 337–364 (RKRILIAIALIKEASRAVGYVMCSLLYP) are cytoplasmic. The chain crosses the membrane as a helical span at residues 365-385 (LVTFFLLCLCIAYWASTAVFL). The Extracellular portion of the chain corresponds to 386–457 (STSNEAVYKI…FNAFMFFWLA (72 aa)). The N-linked (GlcNAc...) asparagine glycan is linked to N417. The helical transmembrane segment at 458–480 (NFVLALGQVTLAGAFASYYWALR) threads the bilayer. The Cytoplasmic portion of the chain corresponds to 481 to 504 (KPDDLPAFPLFSAFGRALRYHTGS). A helical membrane pass occupies residues 505 to 525 (LAFGALILAIVQIIRVILEYL). The Extracellular portion of the chain corresponds to 526-563 (DQRLKAAENKFAKCLMTCLKCCFWCLEKFIKFLNRNAY). The helical transmembrane segment at 564-584 (IMIAIYGTNFCTSARNAFFLL) threads the bilayer. Residues 585–599 (MRNIIRVAVLDKVTD) lie on the Cytoplasmic side of the membrane. Residues 600–620 (FLFLLGKLLIVGSVGILAFFF) traverse the membrane as a helical segment. Residues 621–638 (FTHRIRIVQDTAPPLNYY) lie on the Extracellular side of the membrane. The helical transmembrane segment at 639-659 (WVPILTVIVGSYLIAHGFFSV) threads the bilayer. Over 660–706 (YGMCVDTLFLCFLEDLERNDGSAERPYFMSSTLKKLLNKTNKKAAES) the chain is Cytoplasmic.

This sequence belongs to the CTL (choline transporter-like) family. As to quaternary structure, interacts with COCH. Present in supporting cells of the inner ear (at protein level). As to expression, expressed in inner ear vestibular tissue.

The protein localises to the cell membrane. Its subcellular location is the mitochondrion outer membrane. It carries out the reaction choline(out) + n H(+)(in) = choline(in) + n H(+)(out). It catalyses the reaction ethanolamine(out) + n H(+)(in) = ethanolamine(in) + n H(+)(out). In terms of biological role, choline/H+ antiporter, mainly in mitochodria. Also acts as a low-affinity ethanolamine/H+ antiporter, regulating the supply of extracellular ethanolamine (Etn) for the CDP-Etn pathway, redistribute intracellular Etn and balance the CDP-Cho and CDP-Etn arms of the Kennedy pathway. Its function is as follows. Does not exhibit choline transporter activity. The polypeptide is Choline transporter-like protein 2 (Homo sapiens (Human)).